We begin with the raw amino-acid sequence, 363 residues long: Adenosine deaminase (363 aa).

Residues H42 and H44 each contribute to the Zn(2+) site. A purine D-ribonucleoside is bound by residues 44–46 (HLD), D172, and G201. The tract at residues 170–184 (IGDTGHRAADIKASA) is gating helix loop; regulates binding affinity for substrates and thus substrate selectivity. Position 226 (H226) interacts with Zn(2+). Residues E229, H253, and D310 each coordinate a purine D-ribonucleoside. D310 provides a ligand contact to Zn(2+).

Belongs to the metallo-dependent hydrolases superfamily. Adenosine and AMP deaminases family. Requires Zn(2+) as cofactor.

The enzyme catalyses adenosine + H2O + H(+) = inosine + NH4(+). The catalysed reaction is S-methyl-5'-thioadenosine + H2O + H(+) = S-methyl-5'-thioinosine + NH4(+). Its pathway is purine metabolism; purine nucleoside salvage. Inhibited by coformycin and methylthiocoformycin (MT-coformycin). Catalyzes the hydrolytic deamination of adenosine to produce inosine. Unlike mammalian adenosine deaminases, also catalyzes the deamination of 5'-methylthioadenosine (MTA), a by-product of polyamine biosynthesis, to produce 5'-methylthioinosine (MTI). Plays an essential role in the purine salvage pathway which allows the parasite to use host cell purines for the synthesis of nucleic acids. The chain is Adenosine deaminase from Plasmodium knowlesi.